We begin with the raw amino-acid sequence, 751 residues long: Amyloid-beta precursor protein (751 aa).

A signal peptide spans 1–17; it reads MLPGLALLLLAAWTARA. Residues 18 to 682 are Extracellular-facing; that stretch reads LEVPTDGNAG…AEDVGSNKGA (665 aa). The tract at residues 28–123 is GFLD subdomain; it reads LLAEPQIAMF…PYRCLVGEFV (96 aa). Residues 28–189 form the E1 domain; it reads LLAEPQIAMF…RGVEFVCCPL (162 aa). 6 cysteine pairs are disulfide-bonded: Cys-38-Cys-62, Cys-73-Cys-117, Cys-98-Cys-105, Cys-133-Cys-187, Cys-144-Cys-174, and Cys-158-Cys-186. 96–110 contacts heparin; that stretch reads NWCKRDRKQCKTHPH. Residues 131–189 are cuBD subdomain; the sequence is DKCKFLHQERMDVCETHLHWHTVAKETCSEKSTNLHDYGMLLPCGIDKFRGVEFVCCPL. Cu(2+)-binding residues include His-147, His-151, and Tyr-168. A zinc-binding region spans residues 181 to 188; it reads GVEFVCCP. 3 residues coordinate Zn(2+): Glu-183, Cys-186, and Cys-187. A disordered region spans residues 195 to 284; the sequence is HVDSADAEED…TTTTTTESVE (90 aa). Ser-198 and Ser-206 each carry phosphoserine; by CK1 and CK2. Residues Tyr-217 and Tyr-262 each carry the sulfotyrosine modification. Over residues 228-264 the composition is skewed to acidic residues; it reads VAEEEEVAEVEEEEADDDEDDEDGDEVEEEAEEPYEE. Over residues 268 to 281 the composition is skewed to low complexity; sequence RTTSIATTTTTTTE. 3 disulfides stabilise this stretch: Cys-291/Cys-341, Cys-300/Cys-324, and Cys-316/Cys-337. The BPTI/Kunitz inhibitor domain occupies 291–341; sequence CSEQAETGPCRAMISRWYFDVTEGKCAPFFYGGCGGNRNNFDTEEYCMAVC. Heparin-binding regions lie at residues 316–344 and 363–428; these read CAPF…CGSV and PGDE…QEAA. A Sulfotyrosine modification is found at Tyr-336. The short motif at 344–346 is the OX-2 element; it reads VIP. The E2 domain occupies 355-546; that stretch reads AVDKYLETPG…EEIQDEVDEL (192 aa). Ser-422 carries the post-translational modification Phosphoserine. Position 478 is a phosphotyrosine (Tyr-478). Positions 504–521 are collagen-binding; sequence AAQIRSQVMTHLRVIYER. Asn-523 and Asn-552 each carry an N-linked (GlcNAc...) asparagine glycan. The Cu(2+) site is built by His-658, Tyr-662, His-665, and His-666. Residues His-658, Tyr-662, His-665, and His-666 each contribute to the Zn(2+) site. An interaction with PSEN1 region spans residues 676–703; it reads VGSNKGAIIGLMVGGVVIATVIVITLVM. Residues 683–703 form a helical membrane-spanning segment; it reads IIGLMVGGVVIATVIVITLVM. The Cytoplasmic segment spans residues 704 to 751; the sequence is LKKKQYTSIHHGVVEVDAAVTPEERHLSKMQQNGYENPTYKFFEQMQN. The Basolateral sorting signal signature appears at 705–715; it reads KKKQYTSIHHG. Residue Thr-710 is modified to Phosphothreonine. The residue at position 711 (Ser-711) is a Phosphoserine; by APP-kinase I. Residues 713–732 form an interaction with G(o)-alpha region; it reads HHGVVEVDAAVTPEERHLSK. A Phosphothreonine; by CDK5 and MAPK10 modification is found at Thr-724. The tract at residues 737–751 is required for the interaction with KIF5B and for anterograde transport in axons; the sequence is GYENPTYKFFEQMQN. Tyr-738 is modified (phosphotyrosine; by ABL1). The YENPXY motif; contains endocytosis signal motif lies at 738-743; that stretch reads YENPTY. Lys-744 participates in a covalent cross-link: Glycyl lysine isopeptide (Lys-Gly) (interchain with G-Cter in ubiquitin).

Belongs to the APP family. As to quaternary structure, binds, via its C-terminus, to the PID domain of several cytoplasmic proteins, including APBB family members, the APBA family, MAPK8IP1, SHC1 and NUMB and DAB1. Binding to DAB1 inhibits its serine phosphorylation. Interacts (via NPXY motif) with DAB2 (via PID domain); the interaction is impaired by tyrosine phosphorylation of the NPXY motif. Also interacts with GPCR-like protein BPP, APPBP1, IB1, KNS2 (via its TPR domains), APPBP2 (via BaSS) and DDB1. In vitro, it binds MAPT via the MT-binding domains. Associates with microtubules in the presence of ATP and in a kinesin-dependent manner. Interacts, through a C-terminal domain, with GNAO1. Amyloid-beta protein 42 binds CHRNA7 in hippocampal neurons. Amyloid-beta associates with HADH2. Interacts with CPEB1, ANKS1B and AGER. Interacts with ITM2B. Interacts with ITM2C. Interacts with IDE. Can form homodimers; dimerization is enhanced in the presence of Cu(2+) ions. Can form homodimers; this is promoted by heparin binding. Amyloid-beta protein 40 interacts with S100A9. CTF-alpha product of APP interacts with GSAP. Isoform APP695 interacts with SORL1 (via N-terminal ectodomain); this interaction retains APP in the trans-Golgi network and reduces processing into soluble APP-alpha and amyloid-beta peptides. Isoform APP770 interacts with SORL1. The C99 fragment also interacts with SORL1. Interacts with PLD3. Interacts with VDAC1. Interacts with NSG1; could regulate APP processing. Amyloid-beta protein 42 interacts with FPR2. Interacts (via transmembrane region) with PSEN1; the interaction is direct. Interacts with LRRK2. Interacts (via cytoplasmic domain) with KIF5B. Interacts (via C-terminus) with APBB2/FE65L1 (via C-terminus). Interacts (via intracellular domain) with APBB3. In terms of processing, proteolytically processed under normal cellular conditions. Cleavage either by alpha-secretase, beta-secretase or theta-secretase leads to generation and extracellular release of soluble APP peptides, S-APP-alpha and S-APP-beta, and the retention of corresponding membrane-anchored C-terminal fragments, C80, C83 and C99. Subsequent processing of C80 and C83 by gamma-secretase yields P3 peptides. This is the major secretory pathway and is non-amyloidogenic. Alternatively, presenilin/nicastrin-mediated gamma-secretase processing of C99 releases the amyloid-beta proteins, amyloid-beta protein 40 and amyloid-beta protein 42, major components of amyloid plaques, and the cytotoxic C-terminal fragments, gamma-CTF(50), gamma-CTF(57) and gamma-CTF(59). PSEN1 cleavage is more efficient with C83 than with C99 as substrate (in vitro). Amyloid-beta protein 40 and Amyloid-beta protein 42 are cleaved by ACE. Many other minor amyloid-beta peptides, amyloid-beta 1-X peptides, are found in cerebral spinal fluid (CSF) including the amyloid-beta X-15 peptides, produced from the cleavage by alpha-secretase. Proteolytically cleaved by caspases during neuronal apoptosis. Cleavage at Asp-720 by either caspase-3, -8 or -9 results in the production of the neurotoxic C31 peptide and the increased production of amyloid-beta peptides. Post-translationally, N- and O-glycosylated. In terms of processing, phosphorylation in the C-terminal on tyrosine, threonine and serine residues is neuron-specific. Phosphorylation can affect APP processing, neuronal differentiation and interaction with other proteins. Phosphorylated on Thr-724 in neuronal cells by Cdc5 kinase and Mapk10, in dividing cells by Cdc2 kinase in a cell-cycle dependent manner with maximal levels at the G2/M phase and, in vitro, by GSK-3-beta. The Thr-724 phosphorylated form causes a conformational change which reduces binding of Fe65 family members. In dopaminergic (DA) neurons, phosphorylation on Thr-724 by LRKK2 promotes the production and the nuclear translocation of the APP intracellular domain (AICD) which induces DA neuron apoptosis. Phosphorylation on Tyr-738 is required for SHC binding. Phosphorylated in the extracellular domain by casein kinases on both soluble and membrane-bound APP. This phosphorylation is inhibited by heparin. Trophic-factor deprivation triggers the cleavage of surface APP by beta-secretase to release sAPP-beta which is further cleaved to release an N-terminal fragment of APP (N-APP). Post-translationally, amyloid-beta peptides are degraded by IDE. In terms of processing, sulfated on tyrosine residues.

It localises to the cell membrane. Its subcellular location is the membrane. It is found in the perikaryon. The protein resides in the cell projection. The protein localises to the growth cone. It localises to the clathrin-coated pit. Its subcellular location is the early endosome. It is found in the cytoplasmic vesicle. The protein resides in the endoplasmic reticulum. The protein localises to the golgi apparatus. It localises to the secreted. Its subcellular location is the cell surface. It is found in the nucleus. The protein resides in the cytoplasm. Functionally, functions as a cell surface receptor and performs physiological functions on the surface of neurons relevant to neurite growth, neuronal adhesion and axonogenesis. Interaction between APP molecules on neighboring cells promotes synaptogenesis. Involved in cell mobility and transcription regulation through protein-protein interactions. Can promote transcription activation through binding to APBB1-KAT5 and inhibit Notch signaling through interaction with Numb. Couples to apoptosis-inducing pathways such as those mediated by G(o) and JIP. Inhibits G(o)-alpha ATPase activity. Acts as a kinesin I membrane receptor, mediating the axonal transport of beta-secretase and presenilin 1. By acting as a kinesin I membrane receptor, plays a role in axonal anterograde transport of cargo towards synapses in axons. May be involved in copper homeostasis/oxidative stress through copper ion reduction. In vitro, copper-metallated APP induces neuronal death directly or is potentiated through Cu(2+)-mediated low-density lipoprotein oxidation. Can regulate neurite outgrowth through binding to components of the extracellular matrix such as heparin and collagen I and IV. Induces a AGER-dependent pathway that involves activation of p38 MAPK, resulting in internalization of amyloid-beta peptide and mitochondrial dysfunction in cultured cortical neurons. Provides Cu(2+) ions for GPC1 which are required for release of nitric oxide (NO) and subsequent degradation of the heparan sulfate chains on GPC1. Amyloid-beta peptides are lipophilic metal chelators with metal-reducing activity. Binds transient metals such as copper, zinc and iron. Its function is as follows. The gamma-CTF peptides as well as the caspase-cleaved peptides, including C31, are potent enhancers of neuronal apoptosis. This chain is Amyloid-beta precursor protein, found in Saimiri sciureus (Common squirrel monkey).